Reading from the N-terminus, the 257-residue chain is Achaete-scute complex protein T3 (257 aa).

The bHLH domain maps to 83-145 (PSVARRNARE…RIAVEYIRGL (63 aa)). Residues 161–221 (YNSADESSND…SEISGGGYIK (61 aa)) are disordered. Low complexity-rich tracts occupy residues 165–184 (DESS…LDSS) and 193–213 (QSAQ…SGSE).

In terms of assembly, efficient DNA binding requires dimerization with another bHLH protein. As to expression, l(1)SC, SC and AC strongly label the presumptive stomatogastric nervous system, while ASE is more prominent in the presumptive procephalic lobe.

Its function is as follows. AS-C proteins are involved in the determination of the neuronal precursors in the peripheral nervous system and the central nervous system. In Drosophila melanogaster (Fruit fly), this protein is Achaete-scute complex protein T3 (l(1)sc).